The chain runs to 2104 residues: Transmembrane matrix receptor MUP-4 (2104 aa).

An N-terminal signal peptide occupies residues 1-15; sequence MRWVPLVLLPLIASA. The Extracellular portion of the chain corresponds to 16–1860; it reads ATTYQHRQTY…FCETAPSNLP (1845 aa). EGF-like domains are found at residues 71-110, 122-163, and 175-213; these read VVNECARPSLNACHKDAQCVDLAEGYTCRCNSGFADTSPD, TTNE…VSTS, and SVNECTNGEADCSNNADCFDRADGYECKCRPGFVDASPN. 6 disulfides stabilise this stretch: cysteine 75-cysteine 89, cysteine 83-cysteine 98, cysteine 126-cysteine 142, cysteine 136-cysteine 151, cysteine 179-cysteine 192, and cysteine 186-cysteine 201. The region spanning 220 to 265 is the WR1 domain; that stretch reads RVCNKPKAPEYYGQQSRQPQCSEGSGCGPNEECRFNTAGEKVCQCR. 3 consecutive EGF-like domains span residues 278-315, 327-360, and 377-416; these read VFSQCEQANECDRNAFCSNTYDGPKCQCKDGFLDVSPD, VRNECADGSHDCSHQAACQDTPTGYICSCNSNCI, and AANQCSDKSLNSCDENADCVQLPDGYTCKCFAGYVDVSSN. Cystine bridges form between cysteine 282–cysteine 294, cysteine 288–cysteine 303, cysteine 331–cysteine 344, cysteine 338–cysteine 353, cysteine 355–cysteine 359, cysteine 381–cysteine 395, and cysteine 389–cysteine 404. The 176-residue stretch at 437-612 folds into the VWFA domain; it reads DLVFLIDGSG…DLNTRLRSAI (176 aa). Residues asparagine 494 and asparagine 556 are each glycosylated (N-linked (GlcNAc...) asparagine). EGF-like domains lie at 728–772 and 819–857; these read SNDE…NKCE and LIDECAAGVADCDPNAKCTDTDESYICTCNEGFLDKSPE. 21 disulfides stabilise this stretch: cysteine 732-cysteine 746, cysteine 740-cysteine 756, cysteine 758-cysteine 771, cysteine 823-cysteine 836, cysteine 830-cysteine 845, cysteine 873-cysteine 886, cysteine 880-cysteine 895, cysteine 923-cysteine 937, cysteine 931-cysteine 946, cysteine 972-cysteine 985, cysteine 979-cysteine 995, cysteine 1020-cysteine 1034, cysteine 1028-cysteine 1046, cysteine 1075-cysteine 1089, cysteine 1083-cysteine 1098, cysteine 1125-cysteine 1139, cysteine 1133-cysteine 1148, cysteine 1173-cysteine 1187, cysteine 1181-cysteine 1196, cysteine 1219-cysteine 1233, and cysteine 1227-cysteine 1242. The EGF-like 9; calcium-binding domain occupies 869–907; the sequence is QRNECLDGTHNCSMNADCIDLPDGFLCRCKEDFVDISPN. Asparagine 879 is a glycosylation site (N-linked (GlcNAc...) asparagine). 7 EGF-like domains span residues 919–958, 968–1007, 1016–1058, 1071–1110, 1121–1160, 1169–1208, and 1215–1254; these read LVNECLITGGHNCHEHAICIDTRDSYKCQCKEGYVDHDEL, LNQICESGKHECDKNARCVEKGANDYECVCNAGFIDKSPL, VEPI…VGAV, LVNECLSASLNSCDAAATCIDLDDGYTCKCPLGSKDESPV, LVNECNIPHLNNCSHFATCIDLEEGYECKCKPEYHDQKPE, IINECLAENLNDCSPNAMCIDKIDGYDCKCKAPFQDEMPS, and RFDECADPKDNDCDKHALCIDTDDSYTCQCKEGFFDEISD. Asparagine 1037 carries N-linked (GlcNAc...) asparagine glycosylation. N-linked (GlcNAc...) asparagine glycosylation occurs at asparagine 1132. Residues asparagine 1271, asparagine 1403, and asparagine 1576 are each glycosylated (N-linked (GlcNAc...) asparagine). 2 SEA domains span residues 1322–1444 and 1495–1620; these read PTTS…DDAD and AVES…PEQL. EGF-like domains lie at 1622 to 1658, 1669 to 1705, and 1717 to 1754; these read PFSNCYHSDCHPDAICKEVGKGYTCTCPDGFRDLNPS, GVNECEKPELNECSPHARCIDLDYLYKCECIRPYVNS, and SIDYCQDVNYCPLNSTCVNVDEQARCDCKPGFVDLRKS. 11 disulfide bridges follow: cysteine 1626–cysteine 1637, cysteine 1631–cysteine 1646, cysteine 1673–cysteine 1687, cysteine 1681–cysteine 1696, cysteine 1721–cysteine 1733, cysteine 1727–cysteine 1742, cysteine 1776–cysteine 1789, cysteine 1783–cysteine 1798, cysteine 1821–cysteine 1830, cysteine 1824–cysteine 1841, and cysteine 1843–cysteine 1852. 2 N-linked (GlcNAc...) asparagine glycosylation sites follow: asparagine 1730 and asparagine 1782. Residues 1772 to 1810 form the EGF-like 20; calcium-binding domain; it reads DIDECALGLHNCSAAAICIDKKIGYECQCQEGYEDGNPS. Residues 1817 to 1853 form the EGF-like 21 domain; that stretch reads AASLCGLCNGHGDCIHDALSSNVTCACLDGYTGQFCE. A glycan (N-linked (GlcNAc...) asparagine) is linked at asparagine 1838. The helical transmembrane segment at 1861 to 1881 threads the bilayer; sequence LILMTLLALLFLLLTLLCCLY. The Cytoplasmic portion of the chain corresponds to 1882–2104; it reads MCARCRCFGA…TTKAEEVNYF (223 aa). A compositionally biased stretch (low complexity) spans 2031-2040; the sequence is SGAMMSSASG. The disordered stretch occupies residues 2031 to 2104; the sequence is SGAMMSSASG…TTKAEEVNYF (74 aa). Composition is skewed to basic and acidic residues over residues 2062–2076 and 2083–2104; these read VYDRTTRTNQSHDFE and TGTERSKREFVTTTKAEEVNYF.

In terms of tissue distribution, abundant at hypodermal cell-matrix junctions overlying muscle of threefold embryos. Expression continues in body wall muscle in larvae and adults and is also detected in other regions where cells show mechanical attachment to the hypodermis including the inner surface of the pharynx, overlying anal and intestinal muscles, overlying vulval and uterine sex muscles, male tail muscle attachment zones and the six mechanosensory neurons (at protein level).

The protein resides in the cell junction. Its subcellular location is the hemidesmosome. The protein localises to the cytoplasm. It localises to the cytoskeleton. It is found in the cell membrane. Required for junctional attachments between hypodermis and muscle, and between the apical epithelial surface and the cuticular matrix. Essential for enclosure of the embryo by the hypodermis, hypodermal integrity, embryo elongation, and maintenance of hypodermal morphology in fully elongated embryos. The chain is Transmembrane matrix receptor MUP-4 from Caenorhabditis elegans.